The following is a 447-amino-acid chain: Teichoic acids export ATP-binding protein TagH (447 aa).

Residues 24 to 246 form the ABC transporter domain; that stretch reads DKLKTLFSVF…YRAFLHRYNH (223 aa). 60 to 67 is a binding site for ATP; sequence GLNGSGKS. The unknown stretch occupies residues 247-447; it reads FTEPQKESYQ…QVLKLKEVTE (201 aa). The disordered stretch occupies residues 359–393; it reads NAVKTTKTKPASTKESRQQEEVQPSPTNVPENNNS. Composition is skewed to polar residues over residues 360–369 and 379–393; these read AVKTTKTKPA and EVQP…NNNS. The 45-residue stretch at 398-442 folds into the LysM domain; that stretch reads STYTVEVGDSVSLIAENHGLTIEQLQTLNPEIIEVPIYPGQVLKL.

This sequence belongs to the ABC transporter superfamily. Teichoic acids exporter (TC 3.A.1.104.1) family. In terms of assembly, the complex is composed of two ATP-binding proteins (TagH) and two transmembrane proteins (TagG).

It is found in the cell membrane. It carries out the reaction ATP + H2O + teichoic acidSide 1 = ADP + phosphate + teichoic acidSide 2.. Functionally, part of the ABC transporter complex TagGH involved in teichoic acids export. Responsible for energy coupling to the transport system. The protein is Teichoic acids export ATP-binding protein TagH of Enterococcus faecalis (strain ATCC 700802 / V583).